Here is a 678-residue protein sequence, read N- to C-terminus: Exoribonuclease 2 (678 aa).

The RNB domain maps to 193 to 521 (REDLTALPFV…INHRLLKAHI (329 aa)). Residues 568-650 (ETRFQAEIFD…ENRSLVGKPT (83 aa)) enclose the S1 motif domain. Residues 659-678 (ETQTSAEQPAEGAENNEPQV) are disordered.

It belongs to the RNR ribonuclease family. RNase II subfamily.

The protein resides in the cytoplasm. The catalysed reaction is Exonucleolytic cleavage in the 3'- to 5'-direction to yield nucleoside 5'-phosphates.. Functionally, involved in mRNA degradation. Hydrolyzes single-stranded polyribonucleotides processively in the 3' to 5' direction. This Vibrio cholerae serotype O1 (strain ATCC 39315 / El Tor Inaba N16961) protein is Exoribonuclease 2.